The sequence spans 123 residues: Large ribosomal subunit protein bL19c (123 aa).

The protein belongs to the bacterial ribosomal protein bL19 family.

The protein resides in the plastid. The protein localises to the chloroplast. This chain is Large ribosomal subunit protein bL19c (rpl19), found in Porphyra purpurea (Red seaweed).